Reading from the N-terminus, the 279-residue chain is Urease accessory protein UreD (279 aa).

The protein belongs to the UreD family. UreD, UreF and UreG form a complex that acts as a GTP-hydrolysis-dependent molecular chaperone, activating the urease apoprotein by helping to assemble the nickel containing metallocenter of UreC. The UreE protein probably delivers the nickel.

It is found in the cytoplasm. Its function is as follows. Required for maturation of urease via the functional incorporation of the urease nickel metallocenter. The sequence is that of Urease accessory protein UreD from Streptococcus salivarius (strain 57.I).